An 87-amino-acid chain; its full sequence is Acyl-CoA-binding protein (87 aa).

Residues Leu-3 to Ala-87 enclose the ACB domain. Residues Tyr-30 to Lys-34, Lys-56, and Tyr-75 contribute to the an acyl-CoA site.

This sequence belongs to the ACBP family.

Its function is as follows. Binds medium- and long-chain acyl-CoA esters with very high affinity and may function as an intracellular carrier of acyl-CoA esters. The polypeptide is Acyl-CoA-binding protein (ACABP) (Fritillaria agrestis (Stinkbells)).